The primary structure comprises 497 residues: Amino acid oxidase fsqB (497 aa).

FAD-binding residues include V14, F15, D38, N53, A57, N58, R63, V64, and V211. C414 carries the post-translational modification S-8alpha-FAD cysteine. The FAD site is built by F447 and K448.

The protein belongs to the MSOX/MTOX family. Dimer. The cofactor is FAD.

It catalyses the reaction (2S,4S,5S)-2-amino-6-(3,4-dihydroxyphenyl)-4-hydroxy-5-(methylamino)hexanoyl-[peptidyl-carrier protein] + O2 = (2S,4S)-2-amino-4-[(3S)-7,8-dihydroxy-1,2,3,4-tetrahydroisoquinolin-3-yl]-4-hydroxybutanoyl-[peptidyl-carrier protein] + H2O2. It carries out the reaction N-methyl-L-dopa + O2 = (3S)-7,8-dihydroxy-1,2,3,4-tetrahydroisoquinoline-3-carboxylate + H2O2. The enzyme catalyses N-methyl-D-dopa + O2 = (3R)-7,8-dihydroxy-1,2,3,4-tetrahydroisoquinoline-3-carboxylate + H2O2. Its pathway is secondary metabolite biosynthesis. Amino acid oxidase; part of the gene cluster that mediates the biosynthesis of the isoquinoline alkaloids fumisoquin A, fumisoquin B and fumisoquin C; as well as small amounts of fumipyrrole as a shunt metabolite. The products of the cluster lead to a brown coloration and are important for growth and conidiation. The nonribosomal peptide synthetase-like protein fsqF, which lacks a canonical condensation domain, is required for addition of a serine-derived dehydroalanine moiety to activated tyrosine but is not essential for the subsequent steps leading to isoquinoline formation. A different enzyme, most likely the ATP-grasp enzyme fsqD, is responsible for activation of tyrosine. Three additional enzymes encoded by the fsq cluster, the N-methyltransferase fsqC, the phenol 2-monooxygenase fsqG and the FAD-dependent oxidase fsqB, catalyze the formation of the isoquinoline ring system in the fumisoquins. FsqB converts the fspF thiolation domain-bound (2S,4S,5S)-2-amino-6-(3,4-dihydroxyphenyl)-4-hydroxy-5-(methylamino)hexanoyl into isoquinoline. The cyclization most likely proceeds via a two-step mechanism, beginning with FAD-dependent oxidation of the methyl group to an iminium species followed by electrophilic attack on the deprotonated phenol. Functionally, is able to convert N-methyl-3,4-dihydroxy-DL-phenylalanine (N-methyl-DOPA) directly into cyclic isoquinoline, in vitro. The absence of the meta-hydroxyl group, as in L-N-methyl-tyrosine, leads to a 25-fold lower rate of reduction and the formation of the demethylated product L-tyrosine, instead of a cyclic product. Does not accept the D-stereoisomer of N-methyltyrosine, in contrast to N-methyl-DOPA, for which both stereoisomers are oxidized with similar rates. In Aspergillus fumigatus (strain ATCC MYA-4609 / CBS 101355 / FGSC A1100 / Af293) (Neosartorya fumigata), this protein is Amino acid oxidase fsqB.